The chain runs to 262 residues: MRRTLYRLMIELTNGRFTSYILRKFAQSRLSSIIIPSYAKVFQINQDEMEKGLKEYRTLHELFTRKLKEGKRSIDTDASSIVSPVDGVFADHGPIEETKTFDIKGKRYSIVDMLGNEERAQRYAGGTYMVIYLSPSHYHRIHSPLSGSVTERFVLGRKSYPVNAAGMEYGKEPLSKNYRSVTEVNSDGEHMALVKVGAMFVNSIELLHERDTVQKGEEMAYFTFGSTVVLLFEKDMIEVVQELKSGQELRLGEKIATRLAHK.

Catalysis depends on charge relay system; for autoendoproteolytic cleavage activity residues aspartate 86, histidine 142, and serine 226. Serine 226 serves as the catalytic Schiff-base intermediate with substrate; via pyruvic acid; for decarboxylase activity. The residue at position 226 (serine 226) is a Pyruvic acid (Ser); by autocatalysis.

Belongs to the phosphatidylserine decarboxylase family. PSD-B subfamily. Prokaryotic type I sub-subfamily. As to quaternary structure, heterodimer of a large membrane-associated beta subunit and a small pyruvoyl-containing alpha subunit. The cofactor is pyruvate. Post-translationally, is synthesized initially as an inactive proenzyme. Formation of the active enzyme involves a self-maturation process in which the active site pyruvoyl group is generated from an internal serine residue via an autocatalytic post-translational modification. Two non-identical subunits are generated from the proenzyme in this reaction, and the pyruvate is formed at the N-terminus of the alpha chain, which is derived from the carboxyl end of the proenzyme. The autoendoproteolytic cleavage occurs by a canonical serine protease mechanism, in which the side chain hydroxyl group of the serine supplies its oxygen atom to form the C-terminus of the beta chain, while the remainder of the serine residue undergoes an oxidative deamination to produce ammonia and the pyruvoyl prosthetic group on the alpha chain. During this reaction, the Ser that is part of the protease active site of the proenzyme becomes the pyruvoyl prosthetic group, which constitutes an essential element of the active site of the mature decarboxylase.

Its subcellular location is the cell membrane. The enzyme catalyses a 1,2-diacyl-sn-glycero-3-phospho-L-serine + H(+) = a 1,2-diacyl-sn-glycero-3-phosphoethanolamine + CO2. Its pathway is phospholipid metabolism; phosphatidylethanolamine biosynthesis; phosphatidylethanolamine from CDP-diacylglycerol: step 2/2. Its function is as follows. Catalyzes the formation of phosphatidylethanolamine (PtdEtn) from phosphatidylserine (PtdSer). This is Phosphatidylserine decarboxylase proenzyme from Bacillus cereus (strain ATCC 10987 / NRS 248).